The sequence spans 414 residues: Serine hydroxymethyltransferase (414 aa).

(6S)-5,6,7,8-tetrahydrofolate-binding positions include leucine 117 and 121–123; that span reads GHL. Residue lysine 226 is modified to N6-(pyridoxal phosphate)lysine. Residues glutamate 241 and 349-351 contribute to the (6S)-5,6,7,8-tetrahydrofolate site; that span reads TPF.

It belongs to the SHMT family. As to quaternary structure, homodimer. Requires pyridoxal 5'-phosphate as cofactor.

It is found in the cytoplasm. It catalyses the reaction (6R)-5,10-methylene-5,6,7,8-tetrahydrofolate + glycine + H2O = (6S)-5,6,7,8-tetrahydrofolate + L-serine. The protein operates within one-carbon metabolism; tetrahydrofolate interconversion. Its pathway is amino-acid biosynthesis; glycine biosynthesis; glycine from L-serine: step 1/1. Its function is as follows. Catalyzes the reversible interconversion of serine and glycine with tetrahydrofolate (THF) serving as the one-carbon carrier. Also exhibits THF-independent aldolase activity toward beta-hydroxyamino acids, producing glycine and aldehydes, via a retro-aldol mechanism. This Methanothrix thermoacetophila (strain DSM 6194 / JCM 14653 / NBRC 101360 / PT) (Methanosaeta thermophila) protein is Serine hydroxymethyltransferase.